The chain runs to 427 residues: GTPase ERA-like, chloroplastic (427 aa).

Residues 1–39 (MAVSPHISPTLSRYKFFSTSVVENPNFSPYRIYSRRRVT) constitute a chloroplast transit peptide. The Era-type G domain maps to 128 to 298 (RSGYVAVVGM…KEWILSKLPF (171 aa)). Positions 136–143 (GMPNVGKS) are G1. Residue 136-143 (GMPNVGKS) coordinates GTP. The G2 stretch occupies residues 162–166 (QTTRH). Residues 183–186 (DTPG) form a G3 region. Residues 183–187 (DTPGV) and 248–251 (NKKD) contribute to the GTP site. A G4 region spans residues 248-251 (NKKD). Positions 277 to 279 (VSA) are G5. Residues 329-406 (YRNEVPYACQ…FLEVEVKVKE (78 aa)) enclose the KH type-2 domain.

The protein belongs to the TRAFAC class TrmE-Era-EngA-EngB-Septin-like GTPase superfamily. Era GTPase family.

The protein localises to the plastid. It localises to the chloroplast stroma. It is found in the chloroplast nucleoid. In terms of biological role, nuclear genome-encoded probable GTPase involved in ribosome biogenesis in chloroplasts. Plays a role in 16S rRNA maturation in plastids and may contribute to the assembly of the small (30S) ribosomal subunit. The sequence is that of GTPase ERA-like, chloroplastic from Arabidopsis thaliana (Mouse-ear cress).